The primary structure comprises 365 residues: MRVLAAMSGGVDSAVAASRAVAAGHEVVGVHLALSQDPQTVRESSRGCCSLEDSADARRVCDKLGIPFYVWDFSDRFKEDVIDNFIDSYAIGETPNPCLRCNEKIKFAALLERGIALGFDAVVTGHYARLTQPADGGDGYLRRGVDPNKDQSYVLGVLGAHEIEHCMFPVGDTIKPEIREEASAAGFSVAKKPDSYDICFIPDGNTQAFLGKHIGMRPGMIVDQEGTQLREHAGVHEFTIGQRKGLDIKAPAADGRPRYVTDIDAKTGTVTVGTRENLKISTIHADRLKFLHPAMDGQIDCEVQVRAHGGVVSCSATIDRDADFMVLNLNEPLQGVARGQAAVLYLPDADGDIVLGSGTICHTES.

Residues A6–S13 and L32 contribute to the ATP site. C101 acts as the Nucleophile in catalysis. C101 and C199 are joined by a disulfide. An ATP-binding site is contributed by G125. Residues K149 to Q151 are interaction with tRNA. C199 acts as the Cysteine persulfide intermediate in catalysis.

It belongs to the MnmA/TRMU family.

Its subcellular location is the cytoplasm. It carries out the reaction S-sulfanyl-L-cysteinyl-[protein] + uridine(34) in tRNA + AH2 + ATP = 2-thiouridine(34) in tRNA + L-cysteinyl-[protein] + A + AMP + diphosphate + H(+). Catalyzes the 2-thiolation of uridine at the wobble position (U34) of tRNA, leading to the formation of s(2)U34. This chain is tRNA-specific 2-thiouridylase MnmA, found in Corynebacterium glutamicum (strain R).